A 179-amino-acid polypeptide reads, in one-letter code: MARLKDKFSNEIAPALQQKFNYKNVMQIPKLEKVVINVGVGEAIQNSKAIDAAVGDLSKITGQKPVVTRAKKSIAAFKLRTGMPIGTKVTLRGDRMYEFVDRLMNVALPRVRDFHGVSDKAFDGRGNYTLGIKEQLIFPEIEYDKIDKVRGMDIIFVTTAKTDEEARELLGMLGMPFRK.

It belongs to the universal ribosomal protein uL5 family. Part of the 50S ribosomal subunit; part of the 5S rRNA/L5/L18/L25 subcomplex. Contacts the 5S rRNA and the P site tRNA. Forms a bridge to the 30S subunit in the 70S ribosome.

Functionally, this is one of the proteins that bind and probably mediate the attachment of the 5S RNA into the large ribosomal subunit, where it forms part of the central protuberance. In the 70S ribosome it contacts protein S13 of the 30S subunit (bridge B1b), connecting the 2 subunits; this bridge is implicated in subunit movement. Contacts the P site tRNA; the 5S rRNA and some of its associated proteins might help stabilize positioning of ribosome-bound tRNAs. The polypeptide is Large ribosomal subunit protein uL5 (Desulfitobacterium hafniense (strain Y51)).